The following is a 493-amino-acid chain: Cysteine--tRNA ligase (493 aa).

Cysteine 29 provides a ligand contact to Zn(2+). The 'HIGH' region motif lies at valine 31–histidine 41. 3 residues coordinate Zn(2+): cysteine 209, histidine 234, and glutamate 238. Residues lysine 266–serine 270 carry the 'KMSKS' region motif. Lysine 269 contributes to the ATP binding site.

The protein belongs to the class-I aminoacyl-tRNA synthetase family. Monomer. The cofactor is Zn(2+).

It localises to the cytoplasm. The catalysed reaction is tRNA(Cys) + L-cysteine + ATP = L-cysteinyl-tRNA(Cys) + AMP + diphosphate. The chain is Cysteine--tRNA ligase from Syntrophobacter fumaroxidans (strain DSM 10017 / MPOB).